The sequence spans 277 residues: Phycobilisome rod-core linker polypeptide CpcG1 (277 aa).

Residues 11-189 (RTLDQRVVSY…YWRNKEISLS (179 aa)) enclose the PBS-linker domain.

This sequence belongs to the phycobilisome linker protein family. In terms of assembly, the phycobilisome is a hemidiscoidal structure that is composed of two distinct substructures: a core complex and a number of rods radiating from the core.

It is found in the cellular thylakoid membrane. Functionally, rod-core linker protein required for attachment of phycocyanin to allophycocyanin in cores of phycobilisomes. Its function is as follows. Linker polypeptides determine the state of aggregation and the location of the disk-shaped phycobiliprotein units within the phycobilisome and modulate their spectroscopic properties in order to mediate a directed and optimal energy transfer. The chain is Phycobilisome rod-core linker polypeptide CpcG1 (cpcG1) from Thermosynechococcus vestitus (strain NIES-2133 / IAM M-273 / BP-1).